The sequence spans 938 residues: Isoleucine--tRNA ligase (938 aa).

Positions 58-68 (PYANGNIHMGH) match the 'HIGH' region motif. E566 contacts L-isoleucyl-5'-AMP. Residues 607-611 (KMSKS) carry the 'KMSKS' region motif. Residue K610 coordinates ATP. Zn(2+)-binding residues include C906, C909, C926, and C929.

The protein belongs to the class-I aminoacyl-tRNA synthetase family. IleS type 1 subfamily. As to quaternary structure, monomer. The cofactor is Zn(2+).

Its subcellular location is the cytoplasm. It catalyses the reaction tRNA(Ile) + L-isoleucine + ATP = L-isoleucyl-tRNA(Ile) + AMP + diphosphate. Functionally, catalyzes the attachment of isoleucine to tRNA(Ile). As IleRS can inadvertently accommodate and process structurally similar amino acids such as valine, to avoid such errors it has two additional distinct tRNA(Ile)-dependent editing activities. One activity is designated as 'pretransfer' editing and involves the hydrolysis of activated Val-AMP. The other activity is designated 'posttransfer' editing and involves deacylation of mischarged Val-tRNA(Ile). The sequence is that of Isoleucine--tRNA ligase from Nitratidesulfovibrio vulgaris (strain ATCC 29579 / DSM 644 / CCUG 34227 / NCIMB 8303 / VKM B-1760 / Hildenborough) (Desulfovibrio vulgaris).